A 263-amino-acid chain; its full sequence is Small ribosomal subunit protein eS4, X isoform (263 aa).

Positions 42–104 constitute an S4 RNA-binding domain; it reads LPLIIFLRNR…TGEHFRLVYD (63 aa). Residue lysine 230 forms a Glycyl lysine isopeptide (Lys-Gly) (interchain with G-Cter in SUMO2) linkage. Lysine 233 bears the N6-acetyllysine mark.

This sequence belongs to the eukaryotic ribosomal protein eS4 family. Component of the small ribosomal subunit. Part of the small subunit (SSU) processome, composed of more than 70 proteins and the RNA chaperone small nucleolar RNA (snoRNA) U3. Identified in a IGF2BP1-dependent mRNP granule complex containing untranslated mRNAs.

Its subcellular location is the cytoplasm. It localises to the nucleus. The protein localises to the nucleolus. Component of the small ribosomal subunit. The ribosome is a large ribonucleoprotein complex responsible for the synthesis of proteins in the cell. Part of the small subunit (SSU) processome, first precursor of the small eukaryotic ribosomal subunit. During the assembly of the SSU processome in the nucleolus, many ribosome biogenesis factors, an RNA chaperone and ribosomal proteins associate with the nascent pre-rRNA and work in concert to generate RNA folding, modifications, rearrangements and cleavage as well as targeted degradation of pre-ribosomal RNA by the RNA exosome. This Monodelphis domestica (Gray short-tailed opossum) protein is Small ribosomal subunit protein eS4, X isoform (RPS4X).